The sequence spans 1389 residues: Carboxypeptidase D (1389 aa).

The signal sequence occupies residues 1–25 (MAGAARGLLWAALSLCLLPEPLRAA). The Extracellular portion of the chain corresponds to 26-1308 (HIKKAEAAAA…ENRIFGLPRE (1283 aa)). Residues 46 to 383 (RYLHAAELGQ…ESLLTFIEKV (338 aa)) enclose the Peptidase M14 1 domain. A disordered region spans residues 95–133 (LPEARQDGEKKKKEEEEEEEEEEGEEGGGGALPGRPQVK). Over residues 96-108 (PEARQDGEKKKKE) the composition is skewed to basic and acidic residues. Residues 109-120 (EEEEEEEEEGEE) show a composition bias toward acidic residues. The Zn(2+) site is built by H139 and E142. N172 is a glycosylation site (N-linked (GlcNAc...) asparagine). The disordered stretch occupies residues 188-235 (ERAREGDCGGGGGGGGEGGGEPGGRENSRGRDLNRSFPDQFGSAQPDL). Residues 195–209 (CGGGGGGGGEGGGEP) are compositionally biased toward gly residues. Positions 210–221 (GGRENSRGRDLN) are enriched in basic and acidic residues. Residue N221 is glycosylated (N-linked (GlcNAc...) asparagine). H260 provides a ligand contact to Zn(2+). E353 functions as the Proton donor/acceptor in the catalytic mechanism. N402, N413, N432, and N472 each carry an N-linked (GlcNAc...) asparagine glycan. Residues 511–801 (RHHHFSDMEI…RSLLQFIKQV (291 aa)) enclose the Peptidase M14 2 domain. Positions 573 and 576 each coordinate Zn(2+). Residues 614-639 (SMNPDGYEKSQEGDRGGTVGRNNSNN) form a disordered region. Over residues 619-628 (GYEKSQEGDR) the composition is skewed to basic and acidic residues. A glycan (N-linked (GlcNAc...) asparagine) is linked at N635. Residue H680 coordinates Zn(2+). The active-site Proton donor/acceptor is the E771. Residues N820, N876, N958, N981, N1073, and N1151 are each glycosylated (N-linked (GlcNAc...) asparagine). The 286-residue stretch at 935–1220 (RYRPYKDLSE…KSLLSMLVEV (286 aa)) folds into the Peptidase M14 3 domain. Residues 1309-1329 (LVVTVAGASMSALVLTACIIW) form a helical membrane-spanning segment. Residues C1326, C1330, and C1332 are each lipidated (S-palmitoyl cysteine). The Cytoplasmic portion of the chain corresponds to 1330 to 1389 (CVCSIKSNRHKDGFPTLRQHHDDYEDEIRMMSTGSKKSLLSHEFQDETDTEEETLYSSKH). Residues 1367–1389 (SLLSHEFQDETDTEEETLYSSKH) are disordered.

Belongs to the peptidase M14 family. Binds to pre-S, hepatitis B virus large envelope protein, via the carboxypeptidase-like domain. It depends on Zn(2+) as a cofactor. In terms of processing, the N-terminus is blocked. As to expression, expressed in liver, lung, kidney, heart, stomach, pancreas, spleen, gall bladder and intestine, but not in skeletal muscle.

The protein resides in the cell membrane. The enzyme catalyses Releases C-terminal Arg and Lys from polypeptides.. The polypeptide is Carboxypeptidase D (CPD) (Anas platyrhynchos (Mallard)).